Reading from the N-terminus, the 639-residue chain is Coiled-coil domain-containing protein 93 homolog (639 aa).

The disordered stretch occupies residues 250–275 (KLESQLSGKDGSGKDTTEAEREEEEK). The span at 260–275 (GSGKDTTEAEREEEEK) shows a compositional bias: basic and acidic residues. The stretch at 332–492 (AEKLHRQKIT…KNRDISLIQR (161 aa)) forms a coiled coil.

The protein belongs to the CCDC93 family.

In Dictyostelium discoideum (Social amoeba), this protein is Coiled-coil domain-containing protein 93 homolog.